The primary structure comprises 492 residues: MSIYVASRRLSGGTTVTALRYATSLRSYSTSFREERDTFGPIQVPSDKLWGAQTQRSLQNFEIGGERERMPEPIVRAFGVLKKCAAKVNMEYGLDPTIGKAIMQAAQEVAEGKLNDHFPLVVWQTGSGTQSNMNANEVIANRAAEILGRKRGEKCVHPNDHVNRSQSSNDTFPTVMHIAAATEINSRLIPSLKTLHSTLESKSFEFKDIVKIGRTHTQDATPLTLGQEFGGYATQVKYGLNRVTCTLPRLYQLAQGGTAVGTGLNTKKGFDVKIAAAVAEETNLPFVTAENKFEALAAHDACVETSGSLNTIATSLMKIANDIRFLGSGPRCGLGELVLPENEPGSSIMPGKVNPTQCEALTMVCAQVMGNHVAVTVGGSNGHFELNVFKPVIASALLHSVRLIADASASFEKNCVRGIEANRERISKLLHESLMLVTSLNPKIGYDNAAAVAKKAHKEGCTLKEAALNLGVLTAEEFDTLVVPEKMIGPSD.

The transit peptide at 1 to 28 (MSIYVASRRLSGGTTVTALRYATSLRSY) directs the protein to the mitochondrion. Substrate-binding positions include 127–129 (SGT), 157–160 (HPND), 167–169 (SSN), and T215. H216 functions as the Proton donor/acceptor in the catalytic mechanism. The active site involves S346. Residues S347 and 352–354 (KVN) contribute to the substrate site.

It belongs to the class-II fumarase/aspartase family. Fumarase subfamily. In terms of assembly, homotetramer.

The protein localises to the mitochondrion. The catalysed reaction is (S)-malate = fumarate + H2O. It functions in the pathway carbohydrate metabolism; tricarboxylic acid cycle; (S)-malate from fumarate: step 1/1. Fumarate hydratase activity (fumarate to L-malate) is strongly inhibited by phosphoenolpyruvate, citrate, oxaloacetate, ATP and ADP. Malate dehydratase activity (malate to fumarate) is activated by oxaloacetate, pyruvate, Asn and Gln. Malate dehydratase activity (malate to fumarate) is inhibited by citrate, succinate, ADP, ATP, glucose-6P and phosphoenolpyruvate. Catalyzes the reversible stereospecific interconversion of fumarate to L-malate. Catalyzes the hydration of fumarate to L-malate in the tricarboxylic acid (TCA) cycle to facilitate a transition step in the production of energy in the form of NADH. The polypeptide is Fumarate hydratase 1, mitochondrial (Arabidopsis thaliana (Mouse-ear cress)).